Here is a 130-residue protein sequence, read N- to C-terminus: Ion transport peptide (130 aa).

Intrachain disulfides connect cysteine 62/cysteine 98, cysteine 78/cysteine 94, and cysteine 81/cysteine 107. Residue leucine 127 is modified to Leucine amide.

It belongs to the arthropod CHH/MIH/GIH/VIH hormone family. As to expression, brain and corpus cardiacum.

The protein localises to the secreted. Functionally, stimulates salt and water reabsorption and inhibits acid secretion in the ileum of S.gregaria. The protein is Ion transport peptide of Schistocerca gregaria (Desert locust).